The following is a 302-amino-acid chain: UDP-N-acetylenolpyruvoylglucosamine reductase (302 aa).

Residues 31–213 form the FAD-binding PCMH-type domain; that stretch reads KIGGPADFLI…KKIREFREKR (183 aa). Arg-176 is an active-site residue. Residue Ser-226 is the Proton donor of the active site. Glu-296 is an active-site residue.

The protein belongs to the MurB family. The cofactor is FAD.

The protein resides in the cytoplasm. It carries out the reaction UDP-N-acetyl-alpha-D-muramate + NADP(+) = UDP-N-acetyl-3-O-(1-carboxyvinyl)-alpha-D-glucosamine + NADPH + H(+). The protein operates within cell wall biogenesis; peptidoglycan biosynthesis. In terms of biological role, cell wall formation. The sequence is that of UDP-N-acetylenolpyruvoylglucosamine reductase from Carboxydothermus hydrogenoformans (strain ATCC BAA-161 / DSM 6008 / Z-2901).